The following is a 712-amino-acid chain: Polyribonucleotide nucleotidyltransferase (712 aa).

Mg(2+) is bound by residues D487 and D493. The region spanning 554-613 (PKIITMTINPDKIRDVIGPSGKQINKIIEETGVKIDIEQDGTVFISSINQEMNDKAKKII) is the KH domain. One can recognise an S1 motif domain in the interval 623 to 691 (GEIYEGKVKR…KQGRVNLSRK (69 aa)).

The protein belongs to the polyribonucleotide nucleotidyltransferase family. Requires Mg(2+) as cofactor.

Its subcellular location is the cytoplasm. It catalyses the reaction RNA(n+1) + phosphate = RNA(n) + a ribonucleoside 5'-diphosphate. Involved in mRNA degradation. Catalyzes the phosphorolysis of single-stranded polyribonucleotides processively in the 3'- to 5'-direction. The polypeptide is Polyribonucleotide nucleotidyltransferase (Bacillus anthracis (strain CDC 684 / NRRL 3495)).